Reading from the N-terminus, the 223-residue chain is Phosphoglycolate phosphatase (223 aa).

Aspartate 10 serves as the catalytic Nucleophile. Residues aspartate 10 and aspartate 12 each coordinate Mg(2+). Residue lysine 149 coordinates substrate. Mg(2+) is bound by residues aspartate 172 and aspartate 176.

Belongs to the archaeal SPP-like hydrolase family. Requires Mg(2+) as cofactor.

The enzyme catalyses 2-phosphoglycolate + H2O = glycolate + phosphate. Functionally, catalyzes the dephosphorylation of 2-phosphoglycolate. This Archaeoglobus fulgidus (strain ATCC 49558 / DSM 4304 / JCM 9628 / NBRC 100126 / VC-16) protein is Phosphoglycolate phosphatase.